Here is a 465-residue protein sequence, read N- to C-terminus: Mothers against decapentaplegic homolog 5 (465 aa).

N-acetylthreonine is present on threonine 2. Residues 13–137 enclose the MH1 domain; the sequence is PAVKRLLGWK…YKRVESPVLP (125 aa). 4 residues coordinate Zn(2+): cysteine 65, cysteine 110, cysteine 122, and histidine 127. The interval 163-243 is disordered; it reads NEPHMPQNAT…GQDNSQPMDT (81 aa). Residues 169–182 are compositionally biased toward polar residues; it reads QNATFPDSFHQPNS. Residues 186–197 show a composition bias toward pro residues; it reads PLSPNSPYPPSP. The span at 198–214 shows a compositional bias: low complexity; it reads ASSTYPNSPASSGPGSP. Residues 234-243 are compositionally biased toward polar residues; the sequence is GQDNSQPMDT. Residues 271-465 form the MH2 domain; that stretch reads WCSIVYYELN…SPLNPISSVS (195 aa). A phosphoserine mark is found at serine 463 and serine 465.

This sequence belongs to the dwarfin/SMAD family. Homodimer. Forms trimers with the co-SMAD SMAD4. Interacts with PEBP2-alpha subunit and SMURF1. Interacts with SUV39H1 and SUV39H2. Interacts (via MH2 domain) with LEMD3. Interacts with WWP1. Interacts with TMEM119. Interacts with ZNF8. Interacts with RANBP3L. Interacts with HK1. Interacts with HGS; this interaction attenuates BMP signaling. Phosphorylated on serine by BMP (bone morphogenetic proteins) type 1 receptor kinase. In terms of processing, ubiquitin-mediated proteolysis by SMAD-specific E3 ubiquitin ligase SMURF1.

The protein resides in the cytoplasm. It is found in the nucleus. The protein localises to the mitochondrion. Transcriptional regulator that plays a role in various cellular processes including embryonic development, cell differentiation, angiogenesis and tissue homeostasis. Upon BMP ligand binding to their receptors at the cell surface, is phosphorylated by activated type I BMP receptors (BMPRIs) and associates with SMAD4 to form a heteromeric complex which translocates into the nucleus acting as transcription factor. In turn, the hetero-trimeric complex recognizes cis-regulatory elements containing Smad Binding Elements (SBEs) to modulate the outcome of the signaling network. Non-phosphorylated SMAD5 has a cytoplasmic role in energy metabolism regulation by promoting mitochondrial respiration and glycolysis in response to cytoplasmic pH changes. Mechanistically, interacts with hexokinase 1/HK1 and thereby accelerates glycolysis. This chain is Mothers against decapentaplegic homolog 5 (Smad5), found in Rattus norvegicus (Rat).